We begin with the raw amino-acid sequence, 121 residues long: Putative iron-sulfur cluster insertion protein ErpA (121 aa).

Cysteine 49, cysteine 113, and cysteine 115 together coordinate iron-sulfur cluster.

Belongs to the HesB/IscA family. As to quaternary structure, homodimer. Iron-sulfur cluster is required as a cofactor.

Functionally, required for insertion of 4Fe-4S clusters. This chain is Putative iron-sulfur cluster insertion protein ErpA, found in Nitrosomonas eutropha (strain DSM 101675 / C91 / Nm57).